The primary structure comprises 274 residues: Large ribosomal subunit protein uL2cz/uL2cy (274 aa).

Disordered stretches follow at residues 1 to 20 (MAIH…AVDS) and 223 to 274 (MNPV…RRSK).

This sequence belongs to the universal ribosomal protein uL2 family. As to quaternary structure, part of the 50S ribosomal subunit.

It is found in the plastid. The protein localises to the chloroplast. This is Large ribosomal subunit protein uL2cz/uL2cy (rpl2-A) from Eucalyptus globulus subsp. globulus (Tasmanian blue gum).